The chain runs to 504 residues: Ribose import ATP-binding protein RbsA (504 aa).

ABC transporter domains lie at leucine 6–arginine 242 and isoleucine 250–threonine 495. Glycine 38–serine 45 serves as a coordination point for ATP.

It belongs to the ABC transporter superfamily. Ribose importer (TC 3.A.1.2.1) family. The complex is composed of an ATP-binding protein (RbsA), two transmembrane proteins (RbsC) and a solute-binding protein (RbsB).

The protein resides in the cell inner membrane. The catalysed reaction is D-ribose(out) + ATP + H2O = D-ribose(in) + ADP + phosphate + H(+). Its function is as follows. Part of the ABC transporter complex RbsABC involved in ribose import. Responsible for energy coupling to the transport system. The protein is Ribose import ATP-binding protein RbsA of Aliivibrio fischeri (strain ATCC 700601 / ES114) (Vibrio fischeri).